A 446-amino-acid polypeptide reads, in one-letter code: N-succinylarginine dihydrolase (446 aa).

Residues 19-28 (AGLSFGNVAS), N110, and 137-138 (HR) contribute to the substrate site. E174 is a catalytic residue. Substrate is bound at residue R213. Residue H249 is part of the active site. Residues D251 and N364 each coordinate substrate. C370 serves as the catalytic Nucleophile.

Belongs to the succinylarginine dihydrolase family. As to quaternary structure, homodimer.

The enzyme catalyses N(2)-succinyl-L-arginine + 2 H2O + 2 H(+) = N(2)-succinyl-L-ornithine + 2 NH4(+) + CO2. Its pathway is amino-acid degradation; L-arginine degradation via AST pathway; L-glutamate and succinate from L-arginine: step 2/5. Functionally, catalyzes the hydrolysis of N(2)-succinylarginine into N(2)-succinylornithine, ammonia and CO(2). The sequence is that of N-succinylarginine dihydrolase from Burkholderia ambifaria (strain ATCC BAA-244 / DSM 16087 / CCUG 44356 / LMG 19182 / AMMD) (Burkholderia cepacia (strain AMMD)).